The following is a 772-amino-acid chain: Putative ribosomal protein S6 kinase alpha-2 (772 aa).

One can recognise a Protein kinase 1 domain in the interval 17-284; that stretch reads FALLRVLGKG…VDEIKNHKFM (268 aa). Residues 23-31 and lysine 49 contribute to the ATP site; that span reads LGKGAYGKV. The Proton acceptor role is filled by aspartate 145. Phosphoserine; by autocatalysis occurs at positions 180, 342, and 347. In terms of domain architecture, AGC-kinase C-terminal spans 285–353; that stretch reads SSIDWDAAVK…VSPSVIFAND (69 aa). The Protein kinase 2 domain occupies 382-653; sequence KSDAGLLGKG…MQELTAHMWL (272 aa). ATP-binding positions include 388–396 and lysine 411; that span reads LGKGAFSVV. Residue aspartate 500 is the Proton acceptor of the active site. A disordered region spans residues 706–772; the sequence is RGIKRQSGDK…IRETRGSDSS (67 aa). Serine 712 is subject to Phosphoserine; by autocatalysis. Composition is skewed to polar residues over residues 718–727 and 739–748; these read SGNSKNSRVT and EMTSSTSRPS.

The protein belongs to the protein kinase superfamily. AGC Ser/Thr protein kinase family. S6 kinase subfamily. It depends on Mg(2+) as a cofactor.

The enzyme catalyses L-seryl-[protein] + ATP = O-phospho-L-seryl-[protein] + ADP + H(+). It carries out the reaction L-threonyl-[protein] + ATP = O-phospho-L-threonyl-[protein] + ADP + H(+). Activated by multiple phosphorylations on threonine and serine residues. Its function is as follows. Serine/threonine kinase that may play a role in mediating the mitogen- and stress-induced effects on transcription. May repress transcription via phosphorylation of 'Ser-1' of histone H2A. May phosphorylate histone H3. In Caenorhabditis elegans, this protein is Putative ribosomal protein S6 kinase alpha-2 (rskn-2).